The chain runs to 316 residues: tRNA-splicing endonuclease subunit Sen34 (316 aa).

Residues 120-184 form a disordered region; the sequence is QAAKKQKLEQ…PGPSNGVTPL (65 aa). Composition is skewed to polar residues over residues 144-159 and 168-181; these read EATQGSETSDDGQPSA and LDSSSPQPGPSNGV. Active-site residues include Tyr-253, His-261, and Lys-292.

The protein belongs to the tRNA-intron endonuclease family. TRNA splicing endonuclease is a heterotetramer composed of TSEN2, TSEN15, TSEN34/LENG5 and TSEN54. tRNA splicing endonuclease complex also contains proteins of the pre-mRNA 3'-end processing machinery such as CLP1, CPSF1, CPSF4 and CSTF2.

It localises to the nucleus. The protein localises to the nucleolus. It catalyses the reaction pretRNA = a 3'-half-tRNA molecule with a 5'-OH end + a 5'-half-tRNA molecule with a 2',3'-cyclic phosphate end + an intron with a 2',3'-cyclic phosphate and a 5'-hydroxyl terminus.. Its function is as follows. Constitutes one of the two catalytic subunit of the tRNA-splicing endonuclease complex, a complex responsible for identification and cleavage of the splice sites in pre-tRNA. It cleaves pre-tRNA at the 5'- and 3'-splice sites to release the intron. The products are an intron and two tRNA half-molecules bearing 2',3'-cyclic phosphate and 5'-OH termini. There are no conserved sequences at the splice sites, but the intron is invariably located at the same site in the gene, placing the splice sites an invariant distance from the constant structural features of the tRNA body. The tRNA splicing endonuclease is also involved in mRNA processing via its association with pre-mRNA 3'-end processing factors, establishing a link between pre-tRNA splicing and pre-mRNA 3'-end formation, suggesting that the endonuclease subunits function in multiple RNA-processing events. This Mus musculus (Mouse) protein is tRNA-splicing endonuclease subunit Sen34 (Tsen34).